The primary structure comprises 154 residues: Myoglobin (154 aa).

The Globin domain occupies 2-148; that stretch reads VLSEGEWQLV…FRKDIAAKYK (147 aa). Ser4 carries the phosphoserine modification. His65 contributes to the nitrite binding site. An O2-binding site is contributed by His65. Thr68 carries the post-translational modification Phosphothreonine. His94 contacts heme b.

The protein belongs to the globin family. As to quaternary structure, monomeric.

It localises to the cytoplasm. The protein localises to the sarcoplasm. The catalysed reaction is Fe(III)-heme b-[protein] + nitric oxide + H2O = Fe(II)-heme b-[protein] + nitrite + 2 H(+). It carries out the reaction H2O2 + AH2 = A + 2 H2O. Monomeric heme protein which primary function is to store oxygen and facilitate its diffusion within muscle tissues. Reversibly binds oxygen through a pentacoordinated heme iron and enables its timely and efficient release as needed during periods of heightened demand. Depending on the oxidative conditions of tissues and cells, and in addition to its ability to bind oxygen, it also has a nitrite reductase activity whereby it regulates the production of bioactive nitric oxide. Under stress conditions, like hypoxia and anoxia, it also protects cells against reactive oxygen species thanks to its pseudoperoxidase activity. In Physeter macrocephalus (Sperm whale), this protein is Myoglobin (MB).